The chain runs to 398 residues: S-adenosylmethionine synthase (398 aa).

His16 lines the ATP pocket. Asp18 provides a ligand contact to Mg(2+). K(+) is bound at residue Glu51. L-methionine-binding residues include Glu64 and Gln108. Residues 108–118 (QSADIAQGVDA) are flexible loop. Residues 176–178 (DSK), 242–243 (KF), Asp251, 257–258 (RK), Ala274, and Lys278 each bind ATP. Asp251 lines the L-methionine pocket. Lys282 is a binding site for L-methionine.

Belongs to the AdoMet synthase family. Homotetramer; dimer of dimers. The cofactor is Mg(2+). It depends on K(+) as a cofactor.

The protein localises to the cytoplasm. It catalyses the reaction L-methionine + ATP + H2O = S-adenosyl-L-methionine + phosphate + diphosphate. It participates in amino-acid biosynthesis; S-adenosyl-L-methionine biosynthesis; S-adenosyl-L-methionine from L-methionine: step 1/1. Catalyzes the formation of S-adenosylmethionine (AdoMet) from methionine and ATP. The overall synthetic reaction is composed of two sequential steps, AdoMet formation and the subsequent tripolyphosphate hydrolysis which occurs prior to release of AdoMet from the enzyme. In Rhodopseudomonas palustris (strain BisB5), this protein is S-adenosylmethionine synthase.